The primary structure comprises 64 residues: Neurotoxin lambda-MeuTx (64 aa).

Residues 1–18 (MSTFIVVFLLLTAILCHA) form the signal peptide. Residues 19 to 27 (EHAIDETAR) constitute a propeptide that is removed on maturation. 3 cysteine pairs are disulfide-bonded: Cys29/Cys43, Cys36/Cys49, and Cys42/Cys58.

Belongs to the scorpion calcin-like family. In terms of tissue distribution, expressed by the venom gland.

It localises to the secreted. In terms of biological role, voltage-gated potassium channel (Kv) inhibitor. In addition it may increase intracellular calcium release through the activation of nuclear inositol 1,4,5-trisphosphate receptors (ITPR) of cardiomyocytes, thereby causing an increase in the contraction frequency of these cells. This chain is Neurotoxin lambda-MeuTx, found in Mesobuthus eupeus (Lesser Asian scorpion).